The sequence spans 513 residues: Protein phosphatase 1H (513 aa).

Ser7 carries the phosphoserine modification. In terms of domain architecture, PPM-type phosphatase spans 77-506; that stretch reads ATGYAEVINA…DDISVYVIPL (430 aa). The segment at 109 to 133 is disordered; that stretch reads TITSTPNRNSKRRSSLPNGEGLQLK. The residue at position 113 (Thr113) is a Phosphothreonine. 2 positions are modified to phosphoserine: Ser123 and Ser210. Residue Arg212 is modified to Omega-N-methylarginine. At Ser220 the chain carries Phosphoserine. Thr223 is modified (phosphothreonine). Ser421 carries the phosphoserine modification.

This sequence belongs to the PP2C family.

The protein resides in the nucleus. The protein localises to the cytoplasm. The catalysed reaction is O-phospho-L-seryl-[protein] + H2O = L-seryl-[protein] + phosphate. It catalyses the reaction O-phospho-L-threonyl-[protein] + H2O = L-threonyl-[protein] + phosphate. In terms of biological role, dephosphorylates CDKN1B at 'Thr-187', thus removing a signal for proteasomal degradation. This is Protein phosphatase 1H (Ppm1h) from Mus musculus (Mouse).